We begin with the raw amino-acid sequence, 122 residues long: Small ribosomal subunit protein uS13 (122 aa).

A disordered region spans residues 95-122 (GLPVRGQKTKTNARTRKGPKRTVANKKK).

The protein belongs to the universal ribosomal protein uS13 family. Part of the 30S ribosomal subunit. Forms a loose heterodimer with protein S19. Forms two bridges to the 50S subunit in the 70S ribosome.

Functionally, located at the top of the head of the 30S subunit, it contacts several helices of the 16S rRNA. In the 70S ribosome it contacts the 23S rRNA (bridge B1a) and protein L5 of the 50S subunit (bridge B1b), connecting the 2 subunits; these bridges are implicated in subunit movement. Contacts the tRNAs in the A and P-sites. This chain is Small ribosomal subunit protein uS13, found in Lachnoclostridium phytofermentans (strain ATCC 700394 / DSM 18823 / ISDg) (Clostridium phytofermentans).